Consider the following 307-residue polypeptide: D-alanine--D-alanine ligase (307 aa).

In terms of domain architecture, ATP-grasp spans 101–301; that stretch reads RDVLAAAGVP…FGELVRWMVD (201 aa). Residue 128–182 coordinates ATP; that stretch reads LPPPYVIKPLGEGSSFGVFIVREDQAYPPQELTRSDWAFGNRVLVESYIGGRELT. Mg(2+) contacts are provided by aspartate 251, glutamate 268, and asparagine 270.

It belongs to the D-alanine--D-alanine ligase family. It depends on Mg(2+) as a cofactor. Requires Mn(2+) as cofactor.

The protein localises to the cytoplasm. The catalysed reaction is 2 D-alanine + ATP = D-alanyl-D-alanine + ADP + phosphate + H(+). The protein operates within cell wall biogenesis; peptidoglycan biosynthesis. Functionally, cell wall formation. This Beijerinckia indica subsp. indica (strain ATCC 9039 / DSM 1715 / NCIMB 8712) protein is D-alanine--D-alanine ligase.